The sequence spans 451 residues: MMSILWSLAAFIVALGILITVHEFGHFWVARRCGVRVERFSIGFGKALWRRTDRQGTEYVIALIPLGGYVKMLDERVEAVAPELRHQSFNNKTVLQRAAIVSAGPIANFLFAIVAYWLVFIIGVPSVRPVIGDISPQSIAAQANISSGMELKSVDGIETPDWDSVRLALISRIGDKQMQVGVAPFGSDNVVEKTLDLRQWQFEPDKQDPVVALGIIPRGPQIESVLAEVQPGSAAQKAGLQAGDRIVKVNGQLLDRWQTFVLQVRDNPGQPLVLDIERESTPLSLTLIPDTKSVGENRSEGFAGVVPKVIPLPDEYKTIRQYGPFTAVYQAGDKTWQLMRLTVSMLGKLITGDVKLNNLSGPISIAQGAGLSAEYGLVYYLMFLALISVNLGIINLFPLPVLDGGHLLFLAIEKLKGGPVSERVQDFSYRIGSILLVLLMGLALFNDFSRL.

Histidine 22 is a Zn(2+) binding site. The active site involves glutamate 23. Histidine 26 provides a ligand contact to Zn(2+). The helical transmembrane segment at 98–120 threads the bilayer; that stretch reads AAIVSAGPIANFLFAIVAYWLVF. PDZ domains are found at residues 115–186 and 199–280; these read AYWL…APFG and QWQF…ERES. The next 2 membrane-spanning stretches (helical) occupy residues 377 to 399 and 427 to 446; these read LVYY…LFPL and FSYR…ALFN.

Belongs to the peptidase M50B family. Interacts with RseA. It depends on Zn(2+) as a cofactor.

It localises to the cell inner membrane. Its function is as follows. A site-2 regulated intramembrane protease (S2P) that cleaves the peptide bond between 'Ala-108' and 'Cys-109' in the transmembrane region of RseA. Part of a regulated intramembrane proteolysis (RIP) cascade. Acts on DegS-cleaved RseA to release the cytoplasmic domain of RseA. This provides the cell with sigma-E (RpoE) activity through the proteolysis of RseA. This Yersinia pestis protein is Protease RseP (rseP).